A 443-amino-acid chain; its full sequence is Protein FAM83A (443 aa).

The disordered stretch occupies residues Asp311 to Ser403. The segment covering Ser315 to Asn326 has biased composition (polar residues). 2 stretches are compositionally biased toward low complexity: residues Thr327–Ser344 and Ser388–Tyr399.

Belongs to the FAM83 family.

It localises to the cytoplasm. Its function is as follows. May function in the epidermal growth factor receptor/EGFR signaling pathway. The polypeptide is Protein FAM83A (Xenopus laevis (African clawed frog)).